Consider the following 262-residue polypeptide: Tryptophan synthase alpha chain (262 aa).

Residues Glu-47 and Asp-58 each act as proton acceptor in the active site.

It belongs to the TrpA family. Tetramer of two alpha and two beta chains.

The enzyme catalyses (1S,2R)-1-C-(indol-3-yl)glycerol 3-phosphate + L-serine = D-glyceraldehyde 3-phosphate + L-tryptophan + H2O. It participates in amino-acid biosynthesis; L-tryptophan biosynthesis; L-tryptophan from chorismate: step 5/5. The alpha subunit is responsible for the aldol cleavage of indoleglycerol phosphate to indole and glyceraldehyde 3-phosphate. The polypeptide is Tryptophan synthase alpha chain (Chromobacterium violaceum (strain ATCC 12472 / DSM 30191 / JCM 1249 / CCUG 213 / NBRC 12614 / NCIMB 9131 / NCTC 9757 / MK)).